A 101-amino-acid chain; its full sequence is Small ribosomal subunit protein bS18c (101 aa).

Positions 1–19 (MDKSKRPFRKSKRSFRRRL) are enriched in basic residues. Disordered regions lie at residues 1-23 (MDKS…PPIG) and 82-101 (KQFE…TRNK).

The protein belongs to the bacterial ribosomal protein bS18 family. In terms of assembly, part of the 30S ribosomal subunit.

The protein localises to the plastid. The protein resides in the chloroplast. The sequence is that of Small ribosomal subunit protein bS18c from Drimys granadensis.